Consider the following 233-residue polypeptide: Pyridoxine 5'-phosphate synthase (233 aa).

A 3-amino-2-oxopropyl phosphate-binding site is contributed by Asn6. Position 8–9 (8–9 (DH)) interacts with 1-deoxy-D-xylulose 5-phosphate. Position 17 (Arg17) interacts with 3-amino-2-oxopropyl phosphate. Catalysis depends on His42, which acts as the Proton acceptor. 2 residues coordinate 1-deoxy-D-xylulose 5-phosphate: Arg44 and His49. The active-site Proton acceptor is Glu69. Residue Thr99 participates in 1-deoxy-D-xylulose 5-phosphate binding. The active-site Proton donor is the His186. Residues Gly187 and 208–209 (GH) contribute to the 3-amino-2-oxopropyl phosphate site.

This sequence belongs to the PNP synthase family. Homooctamer; tetramer of dimers.

Its subcellular location is the cytoplasm. The catalysed reaction is 3-amino-2-oxopropyl phosphate + 1-deoxy-D-xylulose 5-phosphate = pyridoxine 5'-phosphate + phosphate + 2 H2O + H(+). It participates in cofactor biosynthesis; pyridoxine 5'-phosphate biosynthesis; pyridoxine 5'-phosphate from D-erythrose 4-phosphate: step 5/5. Catalyzes the complicated ring closure reaction between the two acyclic compounds 1-deoxy-D-xylulose-5-phosphate (DXP) and 3-amino-2-oxopropyl phosphate (1-amino-acetone-3-phosphate or AAP) to form pyridoxine 5'-phosphate (PNP) and inorganic phosphate. In Anaplasma phagocytophilum (strain HZ), this protein is Pyridoxine 5'-phosphate synthase.